A 158-amino-acid polypeptide reads, in one-letter code: Transcriptional repressor NrdR (158 aa).

The segment at Cys-3–Cys-34 is a zinc-finger region. The ATP-cone domain occupies Ile-49 to Asp-139.

The protein belongs to the NrdR family. The cofactor is Zn(2+).

In terms of biological role, negatively regulates transcription of bacterial ribonucleotide reductase nrd genes and operons by binding to NrdR-boxes. The protein is Transcriptional repressor NrdR of Synechococcus sp. (strain CC9311).